The following is an 89-amino-acid chain: Small ribosomal subunit protein uS15 (89 aa).

This sequence belongs to the universal ribosomal protein uS15 family. Part of the 30S ribosomal subunit. Forms a bridge to the 50S subunit in the 70S ribosome, contacting the 23S rRNA.

One of the primary rRNA binding proteins, it binds directly to 16S rRNA where it helps nucleate assembly of the platform of the 30S subunit by binding and bridging several RNA helices of the 16S rRNA. Functionally, forms an intersubunit bridge (bridge B4) with the 23S rRNA of the 50S subunit in the ribosome. The sequence is that of Small ribosomal subunit protein uS15 from Latilactobacillus sakei subsp. sakei (strain 23K) (Lactobacillus sakei subsp. sakei).